We begin with the raw amino-acid sequence, 339 residues long: Phenylalanine--tRNA ligase alpha subunit (339 aa).

Glu-254 is a binding site for Mg(2+).

The protein belongs to the class-II aminoacyl-tRNA synthetase family. Phe-tRNA synthetase alpha subunit type 1 subfamily. As to quaternary structure, tetramer of two alpha and two beta subunits. The cofactor is Mg(2+).

The protein localises to the cytoplasm. It catalyses the reaction tRNA(Phe) + L-phenylalanine + ATP = L-phenylalanyl-tRNA(Phe) + AMP + diphosphate + H(+). In Clostridium botulinum (strain Langeland / NCTC 10281 / Type F), this protein is Phenylalanine--tRNA ligase alpha subunit.